A 197-amino-acid chain; its full sequence is Segregation and condensation protein B (197 aa).

It belongs to the ScpB family. As to quaternary structure, homodimer. Homodimerization may be required to stabilize the binding of ScpA to the Smc head domains. Component of a cohesin-like complex composed of ScpA, ScpB and the Smc homodimer, in which ScpA and ScpB bind to the head domain of Smc. The presence of the three proteins is required for the association of the complex with DNA.

It is found in the cytoplasm. In terms of biological role, participates in chromosomal partition during cell division. May act via the formation of a condensin-like complex containing Smc and ScpA that pull DNA away from mid-cell into both cell halves. This chain is Segregation and condensation protein B, found in Malacoplasma penetrans (strain HF-2) (Mycoplasma penetrans).